Consider the following 266-residue polypeptide: Undecaprenyl-diphosphatase (266 aa).

The next 8 membrane-spanning stretches (helical) occupy residues 1 to 21 (MTLT…FLPI), 39 to 59 (QGLA…MIYF), 87 to 107 (WWVI…KAFI), 111 to 131 (ARSA…LWYA), 150 to 172 (LIVG…ITMT), 187 to 207 (FSFL…TLDL), 218 to 238 (ALIV…YLFL), and 244 to 264 (IGML…LLFV).

This sequence belongs to the UppP family.

Its subcellular location is the cell inner membrane. It carries out the reaction di-trans,octa-cis-undecaprenyl diphosphate + H2O = di-trans,octa-cis-undecaprenyl phosphate + phosphate + H(+). Catalyzes the dephosphorylation of undecaprenyl diphosphate (UPP). Confers resistance to bacitracin. The polypeptide is Undecaprenyl-diphosphatase (Pseudoalteromonas atlantica (strain T6c / ATCC BAA-1087)).